Here is a 538-residue protein sequence, read N- to C-terminus: Putative cysteine ligase BshC (538 aa).

Residues 460–484 (KINEQIELLERMLKRNVEKKHEVEL) adopt a coiled-coil conformation.

This sequence belongs to the BshC family.

Involved in bacillithiol (BSH) biosynthesis. May catalyze the last step of the pathway, the addition of cysteine to glucosamine malate (GlcN-Mal) to generate BSH. This is Putative cysteine ligase BshC from Bacillus thuringiensis subsp. konkukian (strain 97-27).